The primary structure comprises 353 residues: MRDEQATGAAITFDRVEKSFAQKGGAPVMALSDCTLTVEPGAITGIIGRSGAGKSTLLRMVNGLERPTGGRVLVGGRDVGAADGAELREIRREVGMIFQHFNLLASRTVFGNVALPLEIAGRPSSEIRTRVADLIARVGLEALADRYPAELSGGQKQRVGIARALATGPKVLLSDEATSALDPETTQTVLRLLADINRDLGLTILLITHEMGVVRDIATHMAVIDGGRIVEAGPTYDIFVRPEHPTTRSFLSGVTGVTLPAFVASRLRPAPPEGPSQEVIRITFAGRHATDPMLARLTGELGIAVNILAGAIEEIGPHPFGNLLVSVETPRGAEARAYLERHQLLTEVLGYVG.

Residues 11–251 (ITFDRVEKSF…PEHPTTRSFL (241 aa)) form the ABC transporter domain. 48–55 (GRSGAGKS) is an ATP binding site.

It belongs to the ABC transporter superfamily. Methionine importer (TC 3.A.1.24) family. The complex is composed of two ATP-binding proteins (MetN), two transmembrane proteins (MetI) and a solute-binding protein (MetQ).

It is found in the cell inner membrane. It catalyses the reaction L-methionine(out) + ATP + H2O = L-methionine(in) + ADP + phosphate + H(+). It carries out the reaction D-methionine(out) + ATP + H2O = D-methionine(in) + ADP + phosphate + H(+). Functionally, part of the ABC transporter complex MetNIQ involved in methionine import. Responsible for energy coupling to the transport system. This is Methionine import ATP-binding protein MetN from Cereibacter sphaeroides (strain ATCC 17023 / DSM 158 / JCM 6121 / CCUG 31486 / LMG 2827 / NBRC 12203 / NCIMB 8253 / ATH 2.4.1.) (Rhodobacter sphaeroides).